Reading from the N-terminus, the 294-residue chain is Non-selective voltage-gated ion channel VDAC2 (294 aa).

The residue at position 2 (Ala2) is an N-acetylalanine. Positions 23 and 31 each coordinate ATP. An N6-acetyllysine; alternate modification is found at Lys31. The residue at position 31 (Lys31) is an N6-succinyllysine; alternate. Lys31 participates in a covalent cross-link: Glycyl lysine isopeptide (Lys-Gly) (interchain with G-Cter in ubiquitin); alternate. A run of 2 beta stranded transmembrane segments spans residues 37–46 (LVKLDVKTKS) and 50–58 (VEFSTSGSS). Lys64 is covalently cross-linked (Glycyl lysine isopeptide (Lys-Gly) (interchain with G-Cter in ubiquitin)). The chain crosses the membrane as a beta stranded span at residues 65–75 (VTGTLETKYKW). The residue at position 78 (Tyr78) is a Phosphotyrosine. 3 beta stranded membrane-spanning segments follow: residues 80–87 (LTFTEKWN), 91–100 (TLGTEIAIED), and 106–115 (LKLTFDTTFS). Residue Thr118 is modified to Phosphothreonine. Lys120 carries the post-translational modification N6-acetyllysine; alternate. Lys120 participates in a covalent cross-link: Glycyl lysine isopeptide (Lys-Gly) (interchain with G-Cter in ubiquitin); alternate. Lys121 is covalently cross-linked (Glycyl lysine isopeptide (Lys-Gly) (interchain with G-Cter in ubiquitin)). 4 consecutive transmembrane segments (beta stranded) span residues 122–131 (SGKIKSSYKR), 134–141 (INLGCDVD), 148–156 (AIHGSAVFG), and 161–169 (LAGYQMTFD). A Glycyl lysine isopeptide (Lys-Gly) (interchain with G-Cter in ubiquitin) cross-link involves residue Lys172. A run of 6 beta stranded transmembrane segments spans residues 174 to 186 (KLTR…GYRT), 189 to 196 (FQLHTNVN), 200 to 209 (EFGGSIYQKV), 213 to 222 (LDTSVNLAWT), 229 to 238 (RFGIAAKYQL), and 242 to 249 (ASISAKVN). The residue at position 251 (Ser251) is a Phosphoserine. Residues 253–255 (LIG) and 271–275 (SALVD) contribute to the NAD(+) site. 2 beta stranded membrane passes run 253–262 (LIGVGYTQTL) and 265–274 (GVKLTLSALV). Lys277 is modified (N6-acetyllysine; alternate). Lys277 is covalently cross-linked (Glycyl lysine isopeptide (Lys-Gly) (interchain with G-Cter in ubiquitin); alternate). The chain crosses the membrane as a beta stranded span at residues 284 to 293 (HKLGLALELE).

Belongs to the eukaryotic mitochondrial porin family. As to quaternary structure, monomer, homodimer and higher order oligomers; formation of higher order structures is necessary for scramblase activity. Interacts with ARMC12 in a TBC1D21-dependent manner. Interacts with KLC3. Interacts with SPATA33. Interacts with PPP3CC in a SPATA33-dependent manner. Post-translationally, ubiquitinated by PRKN during mitophagy, leading to its degradation and enhancement of mitophagy. Deubiquitinated by USP30.

It localises to the mitochondrion outer membrane. Its subcellular location is the membrane. The enzyme catalyses chloride(in) = chloride(out). It catalyses the reaction K(+)(in) = K(+)(out). It carries out the reaction a 1,2-diacyl-sn-glycero-3-phospho-L-serine(in) = a 1,2-diacyl-sn-glycero-3-phospho-L-serine(out). The catalysed reaction is a 1,2-diacyl-sn-glycero-3-phosphocholine(in) = a 1,2-diacyl-sn-glycero-3-phosphocholine(out). The enzyme catalyses a 1,2-diacyl-sn-glycero-3-phospho-(1D-myo-inositol)(in) = a 1,2-diacyl-sn-glycero-3-phospho-(1D-myo-inositol)(out). Functionally, non-selective voltage-gated ion channel that mediates the transport of anions and cations through the mitochondrion outer membrane and plasma membrane. The channel adopts an open conformation at zero mV and a closed conformation at both positive and negative potentials. There are two populations of channels; the main that functions in a lower open-state conductance with lower ion selectivity, that switch, in a voltage-dependent manner, from the open to a low-conducting 'closed' state and the other that has a normal ion selectivity in the typical high conductance, 'open' state. Binds various lipids, including the sphingolipid ceramide, the phospholipid phosphatidylcholine, and the sterols cholesterol and oxysterol. Binding of ceramide promotes the mitochondrial outer membrane permeabilization (MOMP) apoptotic pathway. Catalyzes the scrambling of phospholipids across the outer mitochondrial membrane; the mechanism is unrelated to channel activity and is capable of translocating both anionic and zwitterionic phospholipids. The chain is Non-selective voltage-gated ion channel VDAC2 from Oryctolagus cuniculus (Rabbit).